A 917-amino-acid polypeptide reads, in one-letter code: Hexokinase-2 (917 aa).

M1 bears the N-acetylmethionine mark. The mitochondrial-binding peptide (MBP) stretch occupies residues 1-16 (MIASHLLAYFFTELNH). Hexokinase domains lie at 16-458 (HDQV…MVTA) and 464-906 (AYQH…LITA). ATP-binding positions include R30 and 84–89 (DLGGTN). The hexokinase small subdomain 1 stretch occupies residues 73–207 (DGTEHGEFLA…DFDIDIVAMV (135 aa)). Residue 84–88 (DLGGT) coordinates D-glucose 6-phosphate. Residues 155–156 (SF), 172–173 (TK), 208–209 (ND), N235, E260, and 291–294 (QLFE) each bind D-glucose. Residues 208-447 (NDTVATMMTC…CDIRFLCSED (240 aa)) form a hexokinase large subdomain 1 region. D209 is a D-glucose 6-phosphate binding site. Position 413–415 (413–415 (DGS)) interacts with D-glucose 6-phosphate. Residue 425-426 (KR) participates in ATP binding. Residues S449 and 532–536 (DLGGT) each bind D-glucose 6-phosphate. The hexokinase small subdomain 2 stretch occupies residues 521–655 (DGTEKGDFLA…EFDLDVVAVV (135 aa)). 532–537 (DLGGTN) is an ATP binding site. Residues 603-604 (SF), 620-621 (TK), and 656-657 (ND) each bind D-glucose. Residues 656–895 (NDTVGTMMTC…CDVSFLESED (240 aa)) form a hexokinase large subdomain 2 region. D-glucose 6-phosphate contacts are provided by D657 and T680. ATP is bound at residue T680. D-glucose-binding positions include 682-683 (SN), E708, and 739-742 (QRFE). ATP-binding positions include 747–748 (GM), 784–788 (TKFLS), and 863–867 (TLYKL). Residues 861–863 (DGT) and S897 each bind D-glucose 6-phosphate.

The protein belongs to the hexokinase family. Monomer. Interacts with TIGAR; the interaction increases hexokinase activity in a hypoxia- and HIF1A-dependent manner.

It is found in the mitochondrion outer membrane. Its subcellular location is the cytoplasm. It localises to the cytosol. It carries out the reaction a D-hexose + ATP = a D-hexose 6-phosphate + ADP + H(+). The catalysed reaction is D-fructose + ATP = D-fructose 6-phosphate + ADP + H(+). It catalyses the reaction D-glucose + ATP = D-glucose 6-phosphate + ADP + H(+). The protein operates within carbohydrate metabolism; hexose metabolism. Its pathway is carbohydrate degradation; glycolysis; D-glyceraldehyde 3-phosphate and glycerone phosphate from D-glucose: step 1/4. Hexokinase activity is specifically inhibited by 2,6-disubstituted glucosamines. Its function is as follows. Catalyzes the phosphorylation of hexose, such as D-glucose and D-fructose, to hexose 6-phosphate (D-glucose 6-phosphate and D-fructose 6-phosphate, respectively). Mediates the initial step of glycolysis by catalyzing phosphorylation of D-glucose to D-glucose 6-phosphate. Plays a key role in maintaining the integrity of the outer mitochondrial membrane by preventing the release of apoptogenic molecules from the intermembrane space and subsequent apoptosis. This is Hexokinase-2 from Equus zebra (Mountain zebra).